Consider the following 175-residue polypeptide: ATP-dependent protease subunit HslV (175 aa).

Residue Thr-2 is part of the active site. Residues Ala-159, Asp-162, and Thr-165 each contribute to the Na(+) site.

This sequence belongs to the peptidase T1B family. HslV subfamily. In terms of assembly, a double ring-shaped homohexamer of HslV is capped on each side by a ring-shaped HslU homohexamer. The assembly of the HslU/HslV complex is dependent on binding of ATP.

The protein localises to the cytoplasm. The enzyme catalyses ATP-dependent cleavage of peptide bonds with broad specificity.. With respect to regulation, allosterically activated by HslU binding. Its function is as follows. Protease subunit of a proteasome-like degradation complex believed to be a general protein degrading machinery. This Ligilactobacillus salivarius (strain UCC118) (Lactobacillus salivarius) protein is ATP-dependent protease subunit HslV.